A 295-amino-acid polypeptide reads, in one-letter code: MQSTAPHRPPQPSRLALYLDLIRWSRPAGWLLLLWPTLSALWIAAGGFPGWHLLAVFTLGTILMRSAGCCVNDVADRDFDRHVKRTAQRPVTSGAVSVREALGVGAVLALVSFGLVLTTNAATIAWSLPALAVTIAYPFAKRFVSMPQAVLGVAFSMGIPMAFTAVGGAVPMLAAWLVLGNLCWVLAYDTEYAMVDRDDDLKIGMKTSAITLGRHDVPAVMAFYLAFVALWAWALAPFGLGWPLHAVLAAMLLQVAWHWRLIRHRTREGCFRAFTGNHWLGFTLFAGIVAGFALR.

8 consecutive transmembrane segments (helical) span residues 28 to 48 (AGWL…AGGF), 51 to 71 (WHLL…GCCV), 101 to 121 (ALGV…TTNA), 124 to 144 (IAWS…KRFV), 159 to 179 (IPMA…WLVL), 220 to 240 (VMAF…PFGL), 242 to 262 (WPLH…WRLI), and 274 to 294 (FTGN…GFAL).

It belongs to the UbiA prenyltransferase family. Mg(2+) serves as cofactor.

The protein resides in the cell inner membrane. It carries out the reaction all-trans-octaprenyl diphosphate + 4-hydroxybenzoate = 4-hydroxy-3-(all-trans-octaprenyl)benzoate + diphosphate. Its pathway is cofactor biosynthesis; ubiquinone biosynthesis. Its function is as follows. Catalyzes the prenylation of para-hydroxybenzoate (PHB) with an all-trans polyprenyl group. Mediates the second step in the final reaction sequence of ubiquinone-8 (UQ-8) biosynthesis, which is the condensation of the polyisoprenoid side chain with PHB, generating the first membrane-bound Q intermediate 3-octaprenyl-4-hydroxybenzoate. The protein is 4-hydroxybenzoate octaprenyltransferase of Paracidovorax citrulli (strain AAC00-1) (Acidovorax citrulli).